A 309-amino-acid polypeptide reads, in one-letter code: HPr kinase/phosphorylase (309 aa).

Active-site residues include histidine 138 and lysine 159. An ATP-binding site is contributed by glycine 153–serine 160. Serine 160 contributes to the Mg(2+) binding site. Catalysis depends on aspartate 177, which acts as the Proton acceptor; for phosphorylation activity. Proton donor; for dephosphorylation activity. The interval isoleucine 201–aspartate 210 is important for the catalytic mechanism of both phosphorylation and dephosphorylation. Glutamate 202 is a Mg(2+) binding site. Residue arginine 243 is part of the active site. The interval proline 264–arginine 269 is important for the catalytic mechanism of dephosphorylation.

Belongs to the HPrK/P family. As to quaternary structure, homohexamer. Mg(2+) is required as a cofactor.

It catalyses the reaction [HPr protein]-L-serine + ATP = [HPr protein]-O-phospho-L-serine + ADP + H(+). The enzyme catalyses [HPr protein]-O-phospho-L-serine + phosphate + H(+) = [HPr protein]-L-serine + diphosphate. Catalyzes the ATP- as well as the pyrophosphate-dependent phosphorylation of a specific serine residue in HPr, a phosphocarrier protein of the phosphoenolpyruvate-dependent sugar phosphotransferase system (PTS). HprK/P also catalyzes the pyrophosphate-producing, inorganic phosphate-dependent dephosphorylation (phosphorolysis) of seryl-phosphorylated HPr (P-Ser-HPr). The two antagonistic activities of HprK/P are regulated by several intracellular metabolites, which change their concentration in response to the absence or presence of rapidly metabolisable carbon sources (glucose, fructose, etc.) in the growth medium. Therefore, by controlling the phosphorylation state of HPr, HPrK/P is a sensor enzyme that plays a major role in the regulation of carbon metabolism and sugar transport: it mediates carbon catabolite repression (CCR), and regulates PTS-catalyzed carbohydrate uptake and inducer exclusion. This is HPr kinase/phosphorylase from Lactococcus lactis subsp. lactis (strain IL1403) (Streptococcus lactis).